Here is a 361-residue protein sequence, read N- to C-terminus: Biotin synthase (361 aa).

One can recognise a Radical SAM core domain in the interval 47 to 278 (VHGDEVALCG…AAHIFVMGGR (232 aa)). Residues cysteine 65, cysteine 69, and cysteine 72 each coordinate [4Fe-4S] cluster. 3 residues coordinate [2Fe-2S] cluster: serine 110, cysteine 143, and cysteine 203. The tract at residues 323-361 (TLRPPDTGKPWAFDGHAPSDADWNRKAAEPRPRPLPVVR) is disordered. A compositionally biased stretch (basic and acidic residues) spans 339-354 (APSDADWNRKAAEPRP).

It belongs to the radical SAM superfamily. Biotin synthase family. As to quaternary structure, homodimer. [4Fe-4S] cluster serves as cofactor. The cofactor is [2Fe-2S] cluster.

It carries out the reaction (4R,5S)-dethiobiotin + (sulfur carrier)-SH + 2 reduced [2Fe-2S]-[ferredoxin] + 2 S-adenosyl-L-methionine = (sulfur carrier)-H + biotin + 2 5'-deoxyadenosine + 2 L-methionine + 2 oxidized [2Fe-2S]-[ferredoxin]. Its pathway is cofactor biosynthesis; biotin biosynthesis; biotin from 7,8-diaminononanoate: step 2/2. Catalyzes the conversion of dethiobiotin (DTB) to biotin by the insertion of a sulfur atom into dethiobiotin via a radical-based mechanism. The sequence is that of Biotin synthase from Anaeromyxobacter sp. (strain K).